We begin with the raw amino-acid sequence, 473 residues long: Probable transporter MCH2 (473 aa).

Residues 1–37 (MSEERHEDHHRDVENKLNLNGKDDINGNTSISIEVPD) lie on the Cytoplasmic side of the membrane. The helical transmembrane segment at 38-58 (GGYGWFILLAFILYNFSTWGA) threads the bilayer. Over 59-83 (NSGYAIYLAHYLENNTFAGGSKLDY) the chain is Extracellular. Asn72 carries N-linked (GlcNAc...) asparagine glycosylation. A helical transmembrane segment spans residues 84 to 105 (ASIGGLAFSCGLFFAPVITWLY). The Cytoplasmic portion of the chain corresponds to 106-111 (HIFSIQ). The helical transmembrane segment at 112–135 (FIIGLGILFQGAALLLAAFSVTLW) threads the bilayer. Residues 136–141 (EIYLTQ) lie on the Extracellular side of the membrane. The helical transmembrane segment at 142–163 (GVLIGFGLAFIFIPSVTLIPLW) threads the bilayer. At 164 to 169 (FRNKRS) the chain is on the cytoplasmic side. A helical transmembrane segment spans residues 170-186 (LASGIGTAGSGLGGIVF). Residues 187-200 (NLGMQSILQKRGVK) are Extracellular-facing. The helical transmembrane segment at 201–220 (WALIAQCIICTSLSTIALML) threads the bilayer. The Cytoplasmic segment spans residues 221–243 (TRTTHQGLRQHKRSYKFELLDYD). A helical transmembrane segment spans residues 244-268 (VLSNFAVWLLFGFVSFAMLGYVVLL). At 269 to 286 (YSLSDFTVSLGYTSKQGS) the chain is on the extracellular side. The helical transmembrane segment at 287–304 (YVSCMVSVGSLLGRPIVG) threads the bilayer. The Cytoplasmic segment spans residues 305 to 312 (HIADKYGS). A helical membrane pass occupies residues 313 to 332 (LTVGMILHLVMAILCWAMWI). Residues 333–342 (PCKNLATAIA) lie on the Extracellular side of the membrane. The chain crosses the membrane as a helical span at residues 343-362 (FGLLVGSIMGTIWPTIASIV). Topologically, residues 363–370 (TRIVGLQK) are cytoplasmic. The chain crosses the membrane as a helical span at residues 371 to 394 (LPGTFGSTWIFMAAFALVAPIIGL). Topologically, residues 395 to 408 (ELRSTDTNGNDYYR) are extracellular. Residues 409 to 433 (TAIFVGFAYFGVSLCQWLLRGFIIA) traverse the membrane as a helical segment. The Cytoplasmic segment spans residues 434-473 (RDEIAVREAYSADQNELHLNVKLSHMSKCLFRYKQLPRRV).

It belongs to the major facilitator superfamily. Monocarboxylate porter (TC 2.A.1.13) family.

It is found in the membrane. Functionally, probable transporter. Does not act in the transport of monocarboxylic acids across the plasma membrane. The protein is Probable transporter MCH2 (MCH2) of Saccharomyces cerevisiae (strain ATCC 204508 / S288c) (Baker's yeast).